The sequence spans 764 residues: Ergosteryl-beta-glucosidase (764 aa).

The Nucleophile role is filled by Glu-515. The tract at residues 588–629 is disordered; it reads HDTRAKTPTPEPSPASTVASVSTSTSKSGSSQPPSFIKPDNH. Position 594 is a phosphothreonine (Thr-594). Residues 601-622 show a composition bias toward low complexity; that stretch reads PASTVASVSTSTSKSGSSQPPS.

It belongs to the glycosyl hydrolase 5 (cellulase A) family.

The protein resides in the cytoplasm. It localises to the cytosol. It is found in the vacuole membrane. It carries out the reaction ergosteryl 3-beta-D-glucoside + H2O = ergosterol + D-glucose. Functionally, ergosteryl beta-glucosidase involved in the ergosteryl beta-glucoside (EG) catabolic pathway and vacuole formation via hydrolysis of EG to generate glucose. Is also able to hydrolyze cholesteryl beta-glucoside and sitosteryl beta-glucoside to generate glucose; and C6-7-nitro-2,1,3-benzoxadiazole (NBD)-GlcCer to generate C6-NBD-ceramide (Cer). In Saccharomyces cerevisiae (strain ATCC 204508 / S288c) (Baker's yeast), this protein is Ergosteryl-beta-glucosidase.